We begin with the raw amino-acid sequence, 258 residues long: MNINEFPQQVNQVISIAETILQGQILGIYLYGSATMNGLRPDSDIDILIITKQELSNSIRADLTKQLLKISGSVGCIEKRPLEVTIINQSDIVPLQFPPKCQYMYGEWLRGEMEAGEYPQACNDPDIMILLWQARKNSITLKGAESKELIPAIPFHEIKKAIRFSLPGLISSFKGDERNVLLTLSRMWFTLVTEEITTKDVAAKWVILKLPERFPPLLTTAKEAYLGNLSDEWETVEKEAMALVEYMKKQIEELLRTE.

The enzyme catalyses spectinomycin + ATP = 9-O-adenylylspectinomycin + diphosphate. Mediates bacterial resistance to spectinomycin, is probably a spectinomycin 9-adenylyltransferase. The polypeptide is Spectinomycin 9-adenylyltransferase (Campylobacter jejuni).